The sequence spans 135 residues: Germinal center-associated signaling and motility-like protein (135 aa).

The disordered stretch occupies residues 1-68; the sequence is MGNYLLRKLS…ENGSGSEEVC (68 aa). Positions 22–48 are enriched in basic and acidic residues; it reads GNPDEERKRQEMTTFERKLQDQDKKSQ. Residues 26 to 50 are a coiled coil; the sequence is EERKRQEMTTFERKLQDQDKKSQEV. Over residues 51–66 the composition is skewed to low complexity; sequence SSTSNQENENGSGSEE.

In Homo sapiens (Human), this protein is Germinal center-associated signaling and motility-like protein (GCSAML).